A 537-amino-acid chain; its full sequence is Frizzled-4 (537 aa).

The N-terminal stretch at 1–36 is a signal peptide; it reads MAWRGAGPSVPGAPGGVGLSLGLLLQLLLLLGPARG. Residues 37-212 lie on the Extracellular side of the membrane; the sequence is FGDEEERRCD…KCGYDAGLYS (176 aa). Positions 40–161 constitute an FZ domain; it reads EEERRCDPIR…NDHNHMCMEG (122 aa). Disulfide bonds link C45-C106, C53-C99, C90-C128, C117-C158, C121-C145, C181-C200, C204-C282, and C302-C377. N-linked (GlcNAc...) asparagine glycosylation is present at N59. N144 is a glycosylation site (N-linked (GlcNAc...) asparagine). A helical transmembrane segment spans residues 213–243; it reads RSAKEFTDIWMAVWASLCFISTAFTVLTFLI. Over 244 to 249 the chain is Cytoplasmic; that stretch reads DSSRFS. The chain crosses the membrane as a helical span at residues 250 to 275; sequence YPERPIIFLSMCYNIYSIAYIVRLTV. Over 276-299 the chain is Extracellular; the sequence is GRERISCDFEEAAEPVLIQEGLKN. A helical membrane pass occupies residues 300 to 333; that stretch reads TGCAIIFLLMYFFGMASSIWWVILTLTWFLAAGL. Residues 334-336 lie on the Cytoplasmic side of the membrane; sequence KWG. A helical transmembrane segment spans residues 337-365; the sequence is HEAIEMHSSYFHIAAWAIPAVKTIVILIM. At 366 to 383 the chain is on the extracellular side; that stretch reads RLVDADELTGLCYVGNQN. The helical transmembrane segment at 384-418 threads the bilayer; the sequence is LDALTGFVVAPLFTYLVIGTLFIAAGLVALFKIRS. Over 419-431 the chain is Cytoplasmic; it reads NLQKDGTKTDKLE. The helical transmembrane segment at 432–460 threads the bilayer; that stretch reads RLMVKIGVFSVLYTVPATCVIACYFYEIS. At 461 to 473 the chain is on the extracellular side; that stretch reads NWALFRYSADDSN. The helical transmembrane segment at 474-495 threads the bilayer; the sequence is MAVEMLKIFMSLLVGITSGMWI. Over 496 to 537 the chain is Cytoplasmic; the sequence is WSAKTLHTWQKCSNRLVNSGKVKREKRGNGWVKPGKGSETVV. Positions 499 to 504 match the Lys-Thr-X-X-X-Trp motif, mediates interaction with the PDZ domain of Dvl family members motif; that stretch reads KTLHTW. The PDZ-binding motif lies at 535–537; the sequence is TVV.

The protein belongs to the G-protein coupled receptor Fz/Smo family. Interacts with MAGI3 and NDP. Component of a complex, at least composed of TSPAN12, FZD4 and norrin (NDP). Interacts (via FZ domain) with TSKU; TSKU competes with WNT2B for binding to FZD4, inhibiting Wnt signaling and repressing peripheral eye development. Interacts with glypican GPC3. Post-translationally, ubiquitinated by ZNRF3, leading to its degradation by the proteasome. As to expression, almost ubiquitous. Largely expressed in adult heart, skeletal muscle, ovary, and fetal kidney. Moderate amounts in adult liver, kidney, pancreas, spleen, and fetal lung, and small amounts in placenta, adult lung, prostate, testis, colon, fetal brain and liver.

The protein resides in the cell membrane. Receptor for Wnt proteins. Most frizzled receptors are coupled to the beta-catenin (CTNNB1) canonical signaling pathway, which leads to the activation of disheveled proteins, inhibition of GSK-3 kinase, nuclear accumulation of beta-catenin (CTNNB1) and activation of Wnt target genes. Plays a critical role in retinal vascularization by acting as a receptor for Wnt proteins and norrin (NDP). In retina, it can be activated by Wnt protein-binding and also by Wnt-independent signaling via binding of norrin (NDP), promoting in both cases beta-catenin (CTNNB1) accumulation and stimulation of LEF/TCF-mediated transcriptional programs. A second signaling pathway involving PKC and calcium fluxes has been seen for some family members, but it is not yet clear if it represents a distinct pathway or if it can be integrated in the canonical pathway, as PKC seems to be required for Wnt-mediated inactivation of GSK-3 kinase. Both pathways seem to involve interactions with G-proteins. May be involved in transduction and intercellular transmission of polarity information during tissue morphogenesis and/or in differentiated tissues. The protein is Frizzled-4 (FZD4) of Homo sapiens (Human).